A 362-amino-acid chain; its full sequence is 3-dehydroquinate synthase (362 aa).

Residues aspartate 71–lysine 76, glycine 105–aspartate 109, threonine 129–threonine 130, lysine 142, lysine 151, and cysteine 169–threonine 172 each bind NAD(+). Glutamate 184, histidine 247, and histidine 264 together coordinate Zn(2+).

The protein belongs to the sugar phosphate cyclases superfamily. Dehydroquinate synthase family. The cofactor is Co(2+). Zn(2+) serves as cofactor. It depends on NAD(+) as a cofactor.

The protein resides in the cytoplasm. The enzyme catalyses 7-phospho-2-dehydro-3-deoxy-D-arabino-heptonate = 3-dehydroquinate + phosphate. It functions in the pathway metabolic intermediate biosynthesis; chorismate biosynthesis; chorismate from D-erythrose 4-phosphate and phosphoenolpyruvate: step 2/7. Catalyzes the conversion of 3-deoxy-D-arabino-heptulosonate 7-phosphate (DAHP) to dehydroquinate (DHQ). The sequence is that of 3-dehydroquinate synthase from Shigella boydii serotype 18 (strain CDC 3083-94 / BS512).